The chain runs to 544 residues: Chaperonin GroEL (544 aa).

Residues 29 to 32 (TLGP), 86 to 90 (DGTTT), Gly-413, 476 to 478 (NAA), and Asp-492 contribute to the ATP site.

This sequence belongs to the chaperonin (HSP60) family. Forms a cylinder of 14 subunits composed of two heptameric rings stacked back-to-back. Interacts with the co-chaperonin GroES.

The protein resides in the cytoplasm. It catalyses the reaction ATP + H2O + a folded polypeptide = ADP + phosphate + an unfolded polypeptide.. Together with its co-chaperonin GroES, plays an essential role in assisting protein folding. The GroEL-GroES system forms a nano-cage that allows encapsulation of the non-native substrate proteins and provides a physical environment optimized to promote and accelerate protein folding. The sequence is that of Chaperonin GroEL from Bacillus mycoides (strain KBAB4) (Bacillus weihenstephanensis).